A 259-amino-acid chain; its full sequence is Kallikrein 1-related peptidase b22 (259 aa).

A signal peptide spans 1-17 (MRFLILFLTLSLGGIDA). Positions 18-24 (APPVQSR) are cleaved as a propeptide — activation peptide. One can recognise a Peptidase S1 domain in the interval 25 to 256 (ILGGFKCEKN…FTSWIKDTMA (232 aa)). Intrachain disulfides connect cysteine 31–cysteine 171, cysteine 50–cysteine 66, cysteine 150–cysteine 217, cysteine 182–cysteine 196, and cysteine 207–cysteine 232. The active-site Charge relay system is the histidine 65. Residue asparagine 102 is glycosylated (N-linked (GlcNAc...) asparagine). Aspartate 118 (charge relay system) is an active-site residue. Residue serine 211 is the Charge relay system of the active site.

This sequence belongs to the peptidase S1 family. Kallikrein subfamily.

The catalysed reaction is Preferential cleavage of Arg-|-Xaa bonds in small molecule substrates. Highly selective action to release kallidin (lysyl-bradykinin) from kininogen involves hydrolysis of Met-|-Xaa or Leu-|-Xaa.. Glandular kallikreins cleave Met-Lys and Arg-Ser bonds in kininogen to release Lys-bradykinin. The protein is Kallikrein 1-related peptidase b22 (Klk1b22) of Mus musculus (Mouse).